The primary structure comprises 116 residues: Large ribosomal subunit protein bL20c (116 aa).

Belongs to the bacterial ribosomal protein bL20 family.

Its subcellular location is the plastid. It is found in the chloroplast. Its function is as follows. Binds directly to 23S ribosomal RNA and is necessary for the in vitro assembly process of the 50S ribosomal subunit. It is not involved in the protein synthesizing functions of that subunit. The protein is Large ribosomal subunit protein bL20c (rpl20) of Marchantia polymorpha (Common liverwort).